An 89-amino-acid chain; its full sequence is Small ribosomal subunit protein uS15 (89 aa).

The protein belongs to the universal ribosomal protein uS15 family. As to quaternary structure, part of the 30S ribosomal subunit. Forms a bridge to the 50S subunit in the 70S ribosome, contacting the 23S rRNA.

Functionally, one of the primary rRNA binding proteins, it binds directly to 16S rRNA where it helps nucleate assembly of the platform of the 30S subunit by binding and bridging several RNA helices of the 16S rRNA. Forms an intersubunit bridge (bridge B4) with the 23S rRNA of the 50S subunit in the ribosome. The protein is Small ribosomal subunit protein uS15 of Salmonella schwarzengrund (strain CVM19633).